Here is a 163-residue protein sequence, read N- to C-terminus: uncharacterized protein (163 aa).

This is an uncharacterized protein from Caenorhabditis elegans.